The following is a 1399-amino-acid chain: Dicer-like protein 2 (1399 aa).

Positions 18 to 194 (MVEESMQSNI…EDLQQIERNL (177 aa)) constitute a Helicase ATP-binding domain. An ATP-binding site is contributed by 31 to 38 (MDTGSGKT). A DEAH box motif is present at residues 139–142 (DEAH). The Helicase C-terminal domain maps to 364 to 549 (KLQLLIKFLV…QSETGHRNFE (186 aa)). The 95-residue stretch at 562–656 (ASQHLHHFCS…LPARQEADDE (95 aa)) folds into the Dicer dsRNA-binding fold domain. 2 RNase III domains span residues 897-1054 (LPSI…TVGG) and 1094-1270 (LDVL…IDSL). Glu-1133, Asp-1256, and Glu-1259 together coordinate Mg(2+). A DRBM domain is found at 1301–1370 (HPKERLGHLA…AWKAVGVLES (70 aa)).

Belongs to the helicase family. Dicer subfamily. The cofactor is Mg(2+). It depends on Mn(2+) as a cofactor.

In terms of biological role, dicer-like endonuclease involved in cleaving double-stranded RNA in the RNA interference (RNAi) pathway. Produces 21 to 25 bp dsRNAs (siRNAs) which target the selective destruction of homologous RNAs leading to sequence-specific suppression of gene expression, called post-transcriptional gene silencing (PTGS). Part of a broad host defense response against viral infection and transposons. This is Dicer-like protein 2 (DCL2) from Phaeosphaeria nodorum (strain SN15 / ATCC MYA-4574 / FGSC 10173) (Glume blotch fungus).